Here is a 180-residue protein sequence, read N- to C-terminus: MFHLRTCAAKSVHKSWDIFFRNTNAGAPPGTAYQSPLSLSRLGFYGLHESDLDKSTRFEEFLQRGRLNVLANVIRYHLGMYHRRSSPYPTDVARICEEAFTRRQILLPFRKPLIVFTPKSLLRHPEARTSFDEMLPGTHFQRVYYDLTRAKPVWYAGRKTHLTELQRFLDTAFDLDAFKK.

K14 is modified (N6-succinyllysine). At S40 the chain carries Phosphoserine. R64 contributes to the thiamine diphosphate binding site.

This sequence belongs to the alpha-ketoglutarate dehydrogenase family. In terms of assembly, homodimer. The 2-oxoglutarate dehydrogenase complex is composed of OGDH (2-oxoglutarate dehydrogenase; E1), DLST (dihydrolipoamide succinyltransferase; E2) and DLD (dihydrolipoamide dehydrogenase; E3). It contains multiple copies of the three enzymatic components (E1, E2 and E3). In the nucleus, the 2-oxoglutarate dehydrogenase complex associates with KAT2A. Interacts with ABHD11; this interaction maintains the functional lipoylation of the 2-oxoglutarate dehydrogenase complex. Thiamine diphosphate serves as cofactor. The cofactor is Mg(2+).

It is found in the mitochondrion matrix. Its subcellular location is the nucleus. It carries out the reaction N(6)-[(R)-lipoyl]-L-lysyl-[protein] + 2-oxoglutarate + H(+) = N(6)-[(R)-S(8)-succinyldihydrolipoyl]-L-lysyl-[protein] + CO2. Its activity is regulated as follows. Calcium ions and ADP stimulate, whereas ATP and NADH reduce catalytic activity. Its function is as follows. 2-oxoglutarate dehydrogenase (E1) component of the 2-oxoglutarate dehydrogenase complex (OGDHC), which mediates the decarboxylation of alpha-ketoglutarate. The 2-oxoglutarate dehydrogenase complex catalyzes the overall conversion of 2-oxoglutarate to succinyl-CoA and CO(2). The 2-oxoglutarate dehydrogenase complex is mainly active in the mitochondrion. A fraction of the 2-oxoglutarate dehydrogenase complex also localizes in the nucleus and is required for lysine succinylation of histones: associates with KAT2A on chromatin and provides succinyl-CoA to histone succinyltransferase KAT2A. The chain is 2-oxoglutarate dehydrogenase, mitochondrial from Mesocricetus auratus (Golden hamster).